The chain runs to 330 residues: PDZ and LIM domain protein 4 (330 aa).

Residues 1-84 form the PDZ domain; that stretch reads MTHSVTLRGP…HLTLSVSRPE (84 aa). Disordered stretches follow at residues 104 to 153 and 219 to 242; these read DPES…SNEA and EAGE…ASKL. Phosphoserine is present on residues Ser-107, Ser-111, Ser-115, Ser-118, Ser-119, Ser-124, and Ser-134. Residues 108–122 are compositionally biased toward polar residues; sequence QDCSPATSRRSSVSG. The 51-residue stretch at 255 to 305 folds into the LIM zinc-binding domain; that stretch reads CTRCGHGIVGTIVKARDKLYHPECFMCSDCGLNLKQRGYFFLDERLYCENH.

In terms of assembly, homodimer. Interacts (via C-terminus only or via combined C-terminus and LIM domain, but not LIM domain only) with PTPN13 (via the second or fourth PDZ domains). Found in a complex with PTPN13 and TRIP6. Interacts (via PDZ domain) with ACTN1 and ACTN2 (via C-terminal SDL residues). Interacts (via PDZ domain) with TRIP6 (via the second LIM domain or via the third LIM domain plus C-terminus). Interacts (via LIM domain) with GRIA1 (via C-terminus); this interaction as well as the interaction with alpha-actinin is required for their colocalization in early endosomes. Interacts with PDLIM1. Forms (via LIM domain) a heterodimer with PDLIM3. Interacts directly with SRC (via kinase domain and to a lesser extent the SH2 domain). In terms of processing, phosphorylated on tyrosine residue(s). Can be dephosphorylated by PTPN13. As to expression, expressed in several non-muscle tissues including lung, brain, ovary and uterus, and especially in epithelial cells at 14 dpc. In the uterus, high expression in the glandular epithelium, but absent in the simple columnar epithelium lining the uterus cavity.

The protein resides in the cytoplasm. It is found in the cytoskeleton. It localises to the cell projection. The protein localises to the dendritic spine. Its subcellular location is the early endosome membrane. The protein resides in the recycling endosome membrane. It is found in the nucleus. It localises to the perinuclear region. The protein localises to the lamellipodium. Its subcellular location is the synapse. The protein resides in the synaptosome. Its function is as follows. Suppresses SRC activation by recognizing and binding to active SRC and facilitating PTPN13-mediated dephosphorylation of SRC 'Tyr-419' leading to its inactivation. Inactivated SRC dissociates from this protein allowing the initiation of a new SRC inactivation cycle. Involved in reorganization of the actin cytoskeleton. In nonmuscle cells, binds to ACTN1 (alpha-actinin-1), increases the affinity of ACTN1 to F-actin (filamentous actin), and promotes formation of actin stress fibers. Involved in regulation of the synaptic AMPA receptor transport in dendritic spines of hippocampal pyramidal neurons directing the receptors toward an insertion at the postsynaptic membrane. Links endosomal surface-internalized GRIA1-containing AMPA receptors to the alpha-actinin/actin cytoskeleton. Increases AMPA receptor-mediated excitatory postsynaptic currents in neurons. This is PDZ and LIM domain protein 4 (Pdlim4) from Mus musculus (Mouse).